Here is a 132-residue protein sequence, read N- to C-terminus: Small ribosomal subunit protein uS8c (132 aa).

This sequence belongs to the universal ribosomal protein uS8 family. In terms of assembly, part of the 30S ribosomal subunit.

It localises to the plastid. The protein resides in the chloroplast. Its function is as follows. One of the primary rRNA binding proteins, it binds directly to 16S rRNA central domain where it helps coordinate assembly of the platform of the 30S subunit. This Calycanthus floridus var. glaucus (Eastern sweetshrub) protein is Small ribosomal subunit protein uS8c (rps8).